Consider the following 245-residue polypeptide: Orotidine 5'-phosphate decarboxylase (245 aa).

Substrate-binding positions include Asp-22, Lys-44, Asp-71–Thr-80, Thr-131, Arg-192, Gln-201, Gly-221, and Arg-222. The Proton donor role is filled by Lys-73.

The protein belongs to the OMP decarboxylase family. Type 1 subfamily. Homodimer.

It catalyses the reaction orotidine 5'-phosphate + H(+) = UMP + CO2. The protein operates within pyrimidine metabolism; UMP biosynthesis via de novo pathway; UMP from orotate: step 2/2. Catalyzes the decarboxylation of orotidine 5'-monophosphate (OMP) to uridine 5'-monophosphate (UMP). The chain is Orotidine 5'-phosphate decarboxylase from Yersinia pestis bv. Antiqua (strain Antiqua).